The sequence spans 577 residues: Protein hinderin (577 aa).

A Phosphoserine modification is found at Ser-21. Residues 91-167 adopt a coiled-coil conformation; that stretch reads LKDLCLEDKR…CQELLSLYQK (77 aa). Ser-179 is modified (phosphoserine). The disordered stretch occupies residues 251 to 282; that stretch reads TLHHPKDDLDKIPSETTTCNCESPGRKPAVPT. Residues 254 to 263 show a composition bias toward basic and acidic residues; the sequence is HPKDDLDKIP. A coiled-coil region spans residues 358-402; it reads LKKQISEDRKQQLMLQKMELEIEKERLQHLLAQQETKLLLKQQQL. Disordered regions lie at residues 425 to 444, 449 to 492, and 520 to 540; these read SSSIKKHQDPPNSGENRKER, FHSH…GSLK, and LSPNSAPKPQRYPSREAGAWN. Residues 449-468 show a composition bias toward basic and acidic residues; that stretch reads FHSHMKDDAQWSCQKKDTCR. Phosphoserine is present on residues Ser-490 and Ser-521.

Interacts (via N- and C-terminal domains) with SMC3 (via central hinge region). In terms of tissue distribution, widely expressed.

Its function is as follows. Competes with SMC1 for binding to SMC3. May affect the availability of SMC3 to engage in the formation of multimeric protein complexes. This Homo sapiens (Human) protein is Protein hinderin (KIAA1328).